The sequence spans 886 residues: Coatomer subunit gamma (886 aa).

5 HEAT repeats span residues V66–E103, R288–M325, V327–E359, S360–L397, and S472–S509. The disordered stretch occupies residues S592–A613.

It belongs to the COPG family. As to quaternary structure, oligomeric complex that consists of at least the alpha, beta, beta', gamma, delta, epsilon and zeta subunits.

The protein localises to the cytoplasm. It localises to the golgi apparatus membrane. Its subcellular location is the cytoplasmic vesicle. The protein resides in the COPI-coated vesicle membrane. Functionally, the coatomer is a cytosolic protein complex that binds to dilysine motifs and reversibly associates with Golgi non-clathrin-coated vesicles, which further mediate biosynthetic protein transport from the ER, via the Golgi up to the trans Golgi network. Coatomer complex is required for budding from Golgi membranes, and is essential for the retrograde Golgi-to-ER transport of dilysine-tagged proteins. This Arabidopsis thaliana (Mouse-ear cress) protein is Coatomer subunit gamma.